The primary structure comprises 130 residues: Small ribosomal subunit protein uS8 (130 aa).

Belongs to the universal ribosomal protein uS8 family. As to quaternary structure, part of the 30S ribosomal subunit. Contacts proteins S5 and S12.

One of the primary rRNA binding proteins, it binds directly to 16S rRNA central domain where it helps coordinate assembly of the platform of the 30S subunit. The sequence is that of Small ribosomal subunit protein uS8 from Pseudomonas aeruginosa (strain UCBPP-PA14).